The following is a 137-amino-acid chain: Small ribosomal subunit protein uS9 (137 aa).

Residues 104 to 137 are disordered; it reads PLKSEGYLTRDPRAKERKKYGLHKARKAPQYSKR. Residues 118 to 137 are compositionally biased toward basic residues; it reads KERKKYGLHKARKAPQYSKR.

This sequence belongs to the universal ribosomal protein uS9 family.

In Gloeothece citriformis (strain PCC 7424) (Cyanothece sp. (strain PCC 7424)), this protein is Small ribosomal subunit protein uS9.